The primary structure comprises 168 residues: Crossover junction endodeoxyribonuclease RuvC (168 aa).

Catalysis depends on residues Asp9, Glu70, and Asp145. The Mg(2+) site is built by Asp9, Glu70, and Asp145.

This sequence belongs to the RuvC family. Homodimer which binds Holliday junction (HJ) DNA. The HJ becomes 2-fold symmetrical on binding to RuvC with unstacked arms; it has a different conformation from HJ DNA in complex with RuvA. In the full resolvosome a probable DNA-RuvA(4)-RuvB(12)-RuvC(2) complex forms which resolves the HJ. Requires Mg(2+) as cofactor.

It localises to the cytoplasm. The catalysed reaction is Endonucleolytic cleavage at a junction such as a reciprocal single-stranded crossover between two homologous DNA duplexes (Holliday junction).. Its function is as follows. The RuvA-RuvB-RuvC complex processes Holliday junction (HJ) DNA during genetic recombination and DNA repair. Endonuclease that resolves HJ intermediates. Cleaves cruciform DNA by making single-stranded nicks across the HJ at symmetrical positions within the homologous arms, yielding a 5'-phosphate and a 3'-hydroxyl group; requires a central core of homology in the junction. The consensus cleavage sequence is 5'-(A/T)TT(C/G)-3'. Cleavage occurs on the 3'-side of the TT dinucleotide at the point of strand exchange. HJ branch migration catalyzed by RuvA-RuvB allows RuvC to scan DNA until it finds its consensus sequence, where it cleaves and resolves the cruciform DNA. This Chlamydia pneumoniae (Chlamydophila pneumoniae) protein is Crossover junction endodeoxyribonuclease RuvC.